The sequence spans 530 residues: Berberine bridge enzyme-like 22 (530 aa).

A signal peptide spans 1–22 (MRELFMYLFLLFLVLCVKSVYS). A disulfide bridge links Cys-32 with Cys-99. N-linked (GlcNAc...) asparagine glycans are attached at residues Asn-39, Asn-47, Asn-68, Asn-75, Asn-141, and Asn-486. Positions 77 to 251 (TSLKPILIVK…LSWKVKLARV (175 aa)) constitute an FAD-binding PCMH-type domain. A cross-link (6-(S-cysteinyl)-8alpha-(pros-histidyl)-FAD (His-Cys)) is located at residues 114 to 176 (HDYEGLSYLS…KIHAFAAGIC (63 aa)).

This sequence belongs to the oxygen-dependent FAD-linked oxidoreductase family. Requires FAD as cofactor. In terms of processing, the FAD cofactor is bound via a bicovalent 6-S-cysteinyl, 8alpha-N1-histidyl FAD linkage. In terms of tissue distribution, accumulates in cell walls of etiolated hypocotyls.

The protein resides in the secreted. It localises to the cell wall. This chain is Berberine bridge enzyme-like 22, found in Arabidopsis thaliana (Mouse-ear cress).